Here is a 283-residue protein sequence, read N- to C-terminus: D-alanine aminotransferase (283 aa).

Tyrosine 32 contributes to the substrate binding site. Pyridoxal 5'-phosphate is bound at residue arginine 51. Substrate contacts are provided by arginine 99 and histidine 101. Lysine 146 serves as the catalytic Proton acceptor. Lysine 146 is modified (N6-(pyridoxal phosphate)lysine). A pyridoxal 5'-phosphate-binding site is contributed by glutamate 178.

It belongs to the class-IV pyridoxal-phosphate-dependent aminotransferase family. Homodimer. Pyridoxal 5'-phosphate serves as cofactor.

The catalysed reaction is D-alanine + 2-oxoglutarate = D-glutamate + pyruvate. Acts on the D-isomers of alanine, leucine, aspartate, glutamate, aminobutyrate, norvaline and asparagine. The enzyme transfers an amino group from a substrate D-amino acid to the pyridoxal phosphate cofactor to form pyridoxamine and an alpha-keto acid in the first half-reaction. The second-half reaction is the reverse of the first, transferring the amino group from the pyridoxamine to a second alpha-keto acid to form the product D-amino acid via a ping-pong mechanism. This is an important process in the formation of D-alanine and D-glutamate, which are essential bacterial cell wall components. This Bacillus sp. (strain YM-1) protein is D-alanine aminotransferase (dat).